The chain runs to 468 residues: Zinc-regulated transporter 1 (468 aa).

Positions methionine 1–threonine 17 are cleaved as a signal peptide. The Extracellular portion of the chain corresponds to glutamate 18–arginine 185. N-linked (GlcNAc...) asparagine glycans are attached at residues asparagine 57 and asparagine 67. A helical membrane pass occupies residues isoleucine 186–leucine 206. Over lysine 207 to tyrosine 217 the chain is Cytoplasmic. Residues isoleucine 218–leucine 238 form a helical membrane-spanning segment. Topologically, residues methionine 239 to glycine 257 are extracellular. A helical membrane pass occupies residues threonine 258–leucine 278. At arginine 279–serine 314 the chain is on the cytoplasmic side. Residues valine 315 to valine 335 traverse the membrane as a helical segment. The Extracellular portion of the chain corresponds to threonine 336 to aspartate 338. The chain crosses the membrane as a helical span at residues valine 339–leucine 359. At serine 360–lysine 374 the chain is on the cytoplasmic side. Residues leucine 375–valine 395 traverse the membrane as a helical segment. Residues leucine 396–threonine 406 are Extracellular-facing. A helical transmembrane segment spans residues leucine 407–isoleucine 427. Topologically, residues glutamate 428–threonine 447 are cytoplasmic. The chain crosses the membrane as a helical span at residues threonine 448–alanine 468.

The protein belongs to the ZIP transporter (TC 2.A.5) family.

The protein resides in the cell membrane. It carries out the reaction Zn(2+)(in) = Zn(2+)(out). Functionally, zinc transporter that acts with PRA1 in sequestration of zinc from host tissues during infection. The pH-regulated antigen 1 (PRA1) binds zinc from its environment and then reassociates with ZRT1 to acquire this essential metal. The polypeptide is Zinc-regulated transporter 1 (ZRT101) (Candida albicans (strain SC5314 / ATCC MYA-2876) (Yeast)).